Reading from the N-terminus, the 338-residue chain is Phenylalanine--tRNA ligase alpha subunit (338 aa).

Glu259 is a binding site for Mg(2+).

The protein belongs to the class-II aminoacyl-tRNA synthetase family. Phe-tRNA synthetase alpha subunit type 1 subfamily. In terms of assembly, tetramer of two alpha and two beta subunits. The cofactor is Mg(2+).

Its subcellular location is the cytoplasm. The enzyme catalyses tRNA(Phe) + L-phenylalanine + ATP = L-phenylalanyl-tRNA(Phe) + AMP + diphosphate + H(+). The polypeptide is Phenylalanine--tRNA ligase alpha subunit (Herminiimonas arsenicoxydans).